Reading from the N-terminus, the 423-residue chain is Serine--tRNA ligase (423 aa).

231–233 (TAE) serves as a coordination point for L-serine. Residue 262 to 264 (RSE) participates in ATP binding. An L-serine-binding site is contributed by Glu-285. 349-352 (EISS) lines the ATP pocket. Ser-384 is a binding site for L-serine.

It belongs to the class-II aminoacyl-tRNA synthetase family. Type-1 seryl-tRNA synthetase subfamily. Homodimer. The tRNA molecule binds across the dimer.

It localises to the cytoplasm. The enzyme catalyses tRNA(Ser) + L-serine + ATP = L-seryl-tRNA(Ser) + AMP + diphosphate + H(+). It catalyses the reaction tRNA(Sec) + L-serine + ATP = L-seryl-tRNA(Sec) + AMP + diphosphate + H(+). The protein operates within aminoacyl-tRNA biosynthesis; selenocysteinyl-tRNA(Sec) biosynthesis; L-seryl-tRNA(Sec) from L-serine and tRNA(Sec): step 1/1. Its function is as follows. Catalyzes the attachment of serine to tRNA(Ser). Is also able to aminoacylate tRNA(Sec) with serine, to form the misacylated tRNA L-seryl-tRNA(Sec), which will be further converted into selenocysteinyl-tRNA(Sec). This Acinetobacter baylyi (strain ATCC 33305 / BD413 / ADP1) protein is Serine--tRNA ligase.